We begin with the raw amino-acid sequence, 375 residues long: Succinyl-diaminopimelate desuccinylase (375 aa).

A Zn(2+)-binding site is contributed by His-66. Residue Asp-68 is part of the active site. Position 99 (Asp-99) interacts with Zn(2+). Glu-133 functions as the Proton acceptor in the catalytic mechanism. Positions 134, 162, and 348 each coordinate Zn(2+).

Belongs to the peptidase M20A family. DapE subfamily. In terms of assembly, homodimer. It depends on Zn(2+) as a cofactor. Co(2+) serves as cofactor.

It catalyses the reaction N-succinyl-(2S,6S)-2,6-diaminopimelate + H2O = (2S,6S)-2,6-diaminopimelate + succinate. It participates in amino-acid biosynthesis; L-lysine biosynthesis via DAP pathway; LL-2,6-diaminopimelate from (S)-tetrahydrodipicolinate (succinylase route): step 3/3. In terms of biological role, catalyzes the hydrolysis of N-succinyl-L,L-diaminopimelic acid (SDAP), forming succinate and LL-2,6-diaminopimelate (DAP), an intermediate involved in the bacterial biosynthesis of lysine and meso-diaminopimelic acid, an essential component of bacterial cell walls. The protein is Succinyl-diaminopimelate desuccinylase of Teredinibacter turnerae (strain ATCC 39867 / T7901).